The chain runs to 229 residues: Cytidylate kinase (229 aa).

12–20 provides a ligand contact to ATP; sequence GPSGAGKGT.

It belongs to the cytidylate kinase family. Type 1 subfamily.

It is found in the cytoplasm. It catalyses the reaction CMP + ATP = CDP + ADP. The enzyme catalyses dCMP + ATP = dCDP + ADP. The protein is Cytidylate kinase of Shewanella frigidimarina (strain NCIMB 400).